The following is a 150-amino-acid chain: Small ribosomal subunit protein eS19 (150 aa).

It belongs to the eukaryotic ribosomal protein eS19 family. Part of the 30S ribosomal subunit.

In terms of biological role, may be involved in maturation of the 30S ribosomal subunit. The sequence is that of Small ribosomal subunit protein eS19 from Thermococcus kodakarensis (strain ATCC BAA-918 / JCM 12380 / KOD1) (Pyrococcus kodakaraensis (strain KOD1)).